We begin with the raw amino-acid sequence, 119 residues long: 5-hydroxyisourate hydrolase (119 aa).

Substrate-binding residues include His8, Arg47, and Tyr116.

The protein belongs to the transthyretin family. 5-hydroxyisourate hydrolase subfamily. In terms of assembly, homotetramer.

It catalyses the reaction 5-hydroxyisourate + H2O = 5-hydroxy-2-oxo-4-ureido-2,5-dihydro-1H-imidazole-5-carboxylate + H(+). It functions in the pathway purine metabolism; urate degradation; (S)-allantoin from urate: step 2/3. Its function is as follows. Catalyzes the hydrolysis of 5-hydroxyisourate (HIU) to 2-oxo-4-hydroxy-4-carboxy-5-ureidoimidazoline (OHCU). The polypeptide is 5-hydroxyisourate hydrolase (Halalkalibacterium halodurans (strain ATCC BAA-125 / DSM 18197 / FERM 7344 / JCM 9153 / C-125) (Bacillus halodurans)).